The primary structure comprises 67 residues: ATP synthase F(0) complex subunit 8 (67 aa).

Residues 8-24 traverse the membrane as a helical segment; the sequence is TWFINIVSMILTLFIVF. Residue lysine 54 is modified to N6-acetyllysine; alternate. Lysine 54 carries the N6-succinyllysine; alternate modification. Lysine 57 is modified (N6-acetyllysine).

It belongs to the ATPase protein 8 family. Component of the ATP synthase complex composed at least of ATP5F1A/subunit alpha, ATP5F1B/subunit beta, ATP5MC1/subunit c (homooctomer), MT-ATP6/subunit a, MT-ATP8/subunit 8, ATP5ME/subunit e, ATP5MF/subunit f, ATP5MG/subunit g, ATP5MK/subunit k, ATP5MJ/subunit j, ATP5F1C/subunit gamma, ATP5F1D/subunit delta, ATP5F1E/subunit epsilon, ATP5PF/subunit F6, ATP5PB/subunit b, ATP5PD/subunit d, ATP5PO/subunit OSCP. ATP synthase complex consists of a soluble F(1) head domain (subunits alpha(3) and beta(3)) - the catalytic core - and a membrane F(0) domain - the membrane proton channel (subunits c, a, 8, e, f, g, k and j). These two domains are linked by a central stalk (subunits gamma, delta, and epsilon) rotating inside the F1 region and a stationary peripheral stalk (subunits F6, b, d, and OSCP). Interacts with PRICKLE3.

Its subcellular location is the mitochondrion membrane. In terms of biological role, subunit 8, of the mitochondrial membrane ATP synthase complex (F(1)F(0) ATP synthase or Complex V) that produces ATP from ADP in the presence of a proton gradient across the membrane which is generated by electron transport complexes of the respiratory chain. ATP synthase complex consist of a soluble F(1) head domain - the catalytic core - and a membrane F(1) domain - the membrane proton channel. These two domains are linked by a central stalk rotating inside the F(1) region and a stationary peripheral stalk. During catalysis, ATP synthesis in the catalytic domain of F(1) is coupled via a rotary mechanism of the central stalk subunits to proton translocation. In vivo, can only synthesize ATP although its ATP hydrolase activity can be activated artificially in vitro. Part of the complex F(0) domain. The sequence is that of ATP synthase F(0) complex subunit 8 from Equus asinus (Donkey).